The sequence spans 311 residues: DNA replication terminus site-binding protein (311 aa).

The protein belongs to the Tus family.

The protein resides in the cytoplasm. Trans-acting protein required for termination of DNA replication. Binds to DNA replication terminator sequences (terA to terF) to prevent the passage of replication forks. The termination efficiency will be affected by the affinity of this protein for the terminator sequence. This Yersinia pseudotuberculosis serotype I (strain IP32953) protein is DNA replication terminus site-binding protein.